We begin with the raw amino-acid sequence, 204 residues long: Inactive ribonuclease-like protein 9 (204 aa).

The signal sequence occupies residues 1–26; it reads MMRTPITTHPLLLLLLLQQLLQPVQF. Disulfide bonds link cysteine 97/cysteine 152, cysteine 115/cysteine 167, and cysteine 122/cysteine 129. Asparagine 130 and asparagine 142 each carry an N-linked (GlcNAc...) asparagine glycan.

Belongs to the pancreatic ribonuclease family.

The protein localises to the secreted. Its function is as follows. Does not exhibit any ribonuclease activity. The polypeptide is Inactive ribonuclease-like protein 9 (RNASE9) (Macaca nemestrina (Pig-tailed macaque)).